Reading from the N-terminus, the 693-residue chain is Elongation factor G (693 aa).

Residues 8 to 283 (PQQRNIGIMA…AVVEYLPSPV (276 aa)) enclose the tr-type G domain. GTP contacts are provided by residues 17-24 (AHIDAGKT), 81-85 (DTPGH), and 135-138 (NKMD).

Belongs to the TRAFAC class translation factor GTPase superfamily. Classic translation factor GTPase family. EF-G/EF-2 subfamily.

The protein resides in the cytoplasm. Its function is as follows. Catalyzes the GTP-dependent ribosomal translocation step during translation elongation. During this step, the ribosome changes from the pre-translocational (PRE) to the post-translocational (POST) state as the newly formed A-site-bound peptidyl-tRNA and P-site-bound deacylated tRNA move to the P and E sites, respectively. Catalyzes the coordinated movement of the two tRNA molecules, the mRNA and conformational changes in the ribosome. This is Elongation factor G from Oleidesulfovibrio alaskensis (strain ATCC BAA-1058 / DSM 17464 / G20) (Desulfovibrio alaskensis).